The following is a 677-amino-acid chain: DNA gyrase subunit B, novobiocin-resistant (677 aa).

A disordered region spans residues 1–23 (MTTYDTRTATDTRGSEQPGHVGT). A novobiocin-binding region spans residues 154-295 (IWTDGHRWTQ…RLLSAEIALQ (142 aa)). A Toprim domain is found at 456 to 570 (SEIFIVEGDS…EGHVHLSRPP (115 aa)). 3 residues coordinate Mg(2+): E462, D535, and D537.

Belongs to the type II topoisomerase GyrB family. As to quaternary structure, heterotetramer, composed of two GyrA and two GyrB chains. In the heterotetramer, GyrA contains the active site tyrosine that forms a transient covalent intermediate with DNA, while GyrB binds cofactors and catalyzes ATP hydrolysis. It depends on Mg(2+) as a cofactor. The cofactor is Mn(2+). Requires Ca(2+) as cofactor.

The protein localises to the cytoplasm. The catalysed reaction is ATP-dependent breakage, passage and rejoining of double-stranded DNA.. Its function is as follows. A type II topoisomerase that negatively supercoils closed circular double-stranded (ds) DNA in an ATP-dependent manner to modulate DNA topology and maintain chromosomes in an underwound state. Negative supercoiling favors strand separation, and DNA replication, transcription, recombination and repair, all of which involve strand separation. Also able to catalyze the interconversion of other topological isomers of dsDNA rings, including catenanes and knotted rings. Type II topoisomerases break and join 2 DNA strands simultaneously in an ATP-dependent manner. The polypeptide is DNA gyrase subunit B, novobiocin-resistant (Streptomyces niveus (Streptomyces spheroides)).